A 446-amino-acid polypeptide reads, in one-letter code: Putative ankyrin repeat protein L273 (446 aa).

6 ANK repeats span residues 71–100, 124–153, 206–237, 245–277, 303–332, and 365–394; these read NGEF…KSNM, DHNK…RMRP, TDIE…KILM, VWVS…KMHV, ELEY…NSYY, and YTDI…QQII.

This Acanthamoeba polyphaga (Amoeba) protein is Putative ankyrin repeat protein L273.